The primary structure comprises 579 residues: 2-isopropylmalate synthase (579 aa).

One can recognise a Pyruvate carboxyltransferase domain in the interval 33-308; it reads PRWLSTDLRD…DPGIDFSDIN (276 aa). The Mg(2+) site is built by D42, H247, H249, and N283. A regulatory domain region spans residues 450–579; it reads SSDLPVPLAS…IVAPLVAAGR (130 aa).

It belongs to the alpha-IPM synthase/homocitrate synthase family. LeuA type 2 subfamily. As to quaternary structure, homodimer. Mg(2+) is required as a cofactor.

It is found in the cytoplasm. It carries out the reaction 3-methyl-2-oxobutanoate + acetyl-CoA + H2O = (2S)-2-isopropylmalate + CoA + H(+). It functions in the pathway amino-acid biosynthesis; L-leucine biosynthesis; L-leucine from 3-methyl-2-oxobutanoate: step 1/4. In terms of biological role, catalyzes the condensation of the acetyl group of acetyl-CoA with 3-methyl-2-oxobutanoate (2-ketoisovalerate) to form 3-carboxy-3-hydroxy-4-methylpentanoate (2-isopropylmalate). This is 2-isopropylmalate synthase from Streptosporangium roseum (strain ATCC 12428 / DSM 43021 / JCM 3005 / KCTC 9067 / NCIMB 10171 / NRRL 2505 / NI 9100).